A 370-amino-acid polypeptide reads, in one-letter code: D-alanine--D-alanine ligase (370 aa).

One can recognise an ATP-grasp domain in the interval 142-348 (KQILTHHHIQ…YTALIDQLIQ (207 aa)). 172-227 (QAHVGDHLFIKPANQGSSIGIHKAENEQEYLDGLADAFKYDYKILVEESIDNPREV) serves as a coordination point for ATP. Mg(2+) contacts are provided by Asp-302, Glu-315, and Asn-317.

This sequence belongs to the D-alanine--D-alanine ligase family. Mg(2+) serves as cofactor. Mn(2+) is required as a cofactor.

It is found in the cytoplasm. It catalyses the reaction 2 D-alanine + ATP = D-alanyl-D-alanine + ADP + phosphate + H(+). The protein operates within cell wall biogenesis; peptidoglycan biosynthesis. In terms of biological role, cell wall formation. The protein is D-alanine--D-alanine ligase of Lactiplantibacillus plantarum (strain ATCC BAA-793 / NCIMB 8826 / WCFS1) (Lactobacillus plantarum).